The chain runs to 598 residues: Elongation factor 4 (598 aa).

Positions 4–186 (INIRNFAIIA…AIVSRLPAPS (183 aa)) constitute a tr-type G domain. GTP-binding positions include 16-21 (DHGKST) and 133-136 (NKID).

Belongs to the TRAFAC class translation factor GTPase superfamily. Classic translation factor GTPase family. LepA subfamily.

Its subcellular location is the cell inner membrane. The enzyme catalyses GTP + H2O = GDP + phosphate + H(+). In terms of biological role, required for accurate and efficient protein synthesis under certain stress conditions. May act as a fidelity factor of the translation reaction, by catalyzing a one-codon backward translocation of tRNAs on improperly translocated ribosomes. Back-translocation proceeds from a post-translocation (POST) complex to a pre-translocation (PRE) complex, thus giving elongation factor G a second chance to translocate the tRNAs correctly. Binds to ribosomes in a GTP-dependent manner. In Ehrlichia ruminantium (strain Welgevonden), this protein is Elongation factor 4.